Here is a 474-residue protein sequence, read N- to C-terminus: uncharacterized protein (474 aa).

A helical transmembrane segment spans residues 3–23 (LTLWLVLGAVGVGAVGTGVGF). The segment at 171–296 (VSDGSSSKTR…KETKDRTKVD (126 aa)) is disordered. Over residues 180-210 (RTPKKTKTSKKKPIKKKSSKSKSSKGSKKQK) the composition is skewed to basic residues. Residues 231 to 253 (TRSQSKQQKGQEQATDQTDSEGV) are compositionally biased toward polar residues. Over residues 257–266 (EGADNTDTEL) the composition is skewed to acidic residues. Positions 267–281 (VETTAETTEQEATTK) are enriched in low complexity. Residues 282–296 (STKDTKETKDRTKVD) are compositionally biased toward basic and acidic residues.

The protein localises to the membrane. This is an uncharacterized protein from Mycoplasma pneumoniae (strain ATCC 29342 / M129 / Subtype 1) (Mycoplasmoides pneumoniae).